The following is a 99-amino-acid chain: Acylphosphatase (99 aa).

One can recognise an Acylphosphatase-like domain in the interval 14–99; the sequence is AVDVTVTGRV…DQGLRSFGVR (86 aa). Catalysis depends on residues Arg-29 and Asn-47.

Belongs to the acylphosphatase family.

It catalyses the reaction an acyl phosphate + H2O = a carboxylate + phosphate + H(+). In Nocardioides sp. (strain ATCC BAA-499 / JS614), this protein is Acylphosphatase (acyP).